We begin with the raw amino-acid sequence, 326 residues long: MKKTTLALGMHDKLFKRARTMYQIEHCICDLLMTKGFLRIETPTLEHFEVFSDVVDNGNYNFFDKNGDLISLRPDITSQIGRVIASTQVHTPIKFSYSGKVFNYNEEMRGLSNEHTQAGVEIIGFPVHQALEEAVISAKEALDVAGVRNYKFEFSHAQLLQLIFEELNLPAVKEAELATYIRDKSITGLKEFTKENPSQYDKVLEQLPSLFGETTAVLTEARQLTDNESFLTALDSLEVLTSRLADNLPETTLDLAQLPAVPYYTGIMFKVFGDKVPDAFVSGGRYDKLFERFGATELTAVGWAIDIDSVYQAVHDDVEFGGDMDD.

The protein belongs to the class-II aminoacyl-tRNA synthetase family. HisZ subfamily. In terms of assembly, heteromultimer composed of HisG and HisZ subunits.

The protein resides in the cytoplasm. It participates in amino-acid biosynthesis; L-histidine biosynthesis; L-histidine from 5-phospho-alpha-D-ribose 1-diphosphate: step 1/9. In terms of biological role, required for the first step of histidine biosynthesis. May allow the feedback regulation of ATP phosphoribosyltransferase activity by histidine. The polypeptide is ATP phosphoribosyltransferase regulatory subunit (Streptococcus thermophilus (strain ATCC BAA-491 / LMD-9)).